A 229-amino-acid chain; its full sequence is 5'-methylthioadenosine/S-adenosylhomocysteine nucleosidase (229 aa).

Glu12 functions as the Proton acceptor in the catalytic mechanism. Substrate contacts are provided by residues Gly78, Ile152, and 173-174 (ME). The Proton donor role is filled by Asp197.

This sequence belongs to the PNP/UDP phosphorylase family. MtnN subfamily.

It carries out the reaction S-adenosyl-L-homocysteine + H2O = S-(5-deoxy-D-ribos-5-yl)-L-homocysteine + adenine. The catalysed reaction is S-methyl-5'-thioadenosine + H2O = 5-(methylsulfanyl)-D-ribose + adenine. The enzyme catalyses 5'-deoxyadenosine + H2O = 5-deoxy-D-ribose + adenine. The protein operates within amino-acid biosynthesis; L-methionine biosynthesis via salvage pathway; S-methyl-5-thio-alpha-D-ribose 1-phosphate from S-methyl-5'-thioadenosine (hydrolase route): step 1/2. Its function is as follows. Catalyzes the irreversible cleavage of the glycosidic bond in both 5'-methylthioadenosine (MTA) and S-adenosylhomocysteine (SAH/AdoHcy) to adenine and the corresponding thioribose, 5'-methylthioribose and S-ribosylhomocysteine, respectively. Also cleaves 5'-deoxyadenosine, a toxic by-product of radical S-adenosylmethionine (SAM) enzymes, into 5-deoxyribose and adenine. This Mannheimia succiniciproducens (strain KCTC 0769BP / MBEL55E) protein is 5'-methylthioadenosine/S-adenosylhomocysteine nucleosidase.